A 350-amino-acid polypeptide reads, in one-letter code: GTPase Obg (350 aa).

The region spanning 1–159 (MKLVDEAEIL…RLLKLELKLL (159 aa)) is the Obg domain. Positions 160-337 (ADVGLLGFPN…IMKDVMAFFD (178 aa)) constitute an OBG-type G domain. Residues 166–173 (GFPNAGKS), 191–195 (FTTLY), 213–216 (DVPG), 287–290 (NKAD), and 318–320 (SAL) each bind GTP. Mg(2+)-binding residues include serine 173 and threonine 193.

The protein belongs to the TRAFAC class OBG-HflX-like GTPase superfamily. OBG GTPase family. As to quaternary structure, monomer. Requires Mg(2+) as cofactor.

It localises to the cytoplasm. In terms of biological role, an essential GTPase which binds GTP, GDP and possibly (p)ppGpp with moderate affinity, with high nucleotide exchange rates and a fairly low GTP hydrolysis rate. Plays a role in control of the cell cycle, stress response, ribosome biogenesis and in those bacteria that undergo differentiation, in morphogenesis control. In Xanthomonas campestris pv. campestris (strain 8004), this protein is GTPase Obg.